Consider the following 173-residue polypeptide: Enhancer of split mdelta protein (173 aa).

One can recognise a bHLH domain in the interval 15–72 (YRKVTKPLLERKRRARMNLYLDELKDLIVDTMDAQGEQVSKLEKADILELTVNYLKAQ). The 34-residue stretch at 93-126 (FRAGYTQAAYEVSHIFSTVPGLDLKFGTHLMKQL) folds into the Orange domain. Residues 147 to 173 (VNLADQKRSKSPREEDIHHGEEVWRPW) form a disordered region. Basic and acidic residues predominate over residues 151–173 (DQKRSKSPREEDIHHGEEVWRPW). A WRPW motif motif is present at residues 170–173 (WRPW).

In terms of assembly, transcription repression requires formation of a complex with a corepressor protein (Groucho).

Its subcellular location is the nucleus. Functionally, transcriptional repressor of genes that require a bHLH protein for their transcription. May serve as a transcriptional regulator of the Achaete-scute complex (AS-C) genes. Contributes to the neural-epidermal lineage decision during early neurogenesis. As part of the Notch signaling pathway, required to maintain the self-renewal and identity of type II neuroblasts by regulating the expression of the transcriptional repressor erm. This chain is Enhancer of split mdelta protein, found in Drosophila melanogaster (Fruit fly).